A 411-amino-acid chain; its full sequence is Tyrosine--tRNA ligase (411 aa).

Y34 serves as a coordination point for L-tyrosine. The short motif at 39–48 (CTATSLHIGS) is the 'HIGH' region element. Y171 and Q175 together coordinate L-tyrosine. The short motif at 231–235 (KMGKT) is the 'KMSKS' region element. Residue K234 participates in ATP binding. One can recognise an S4 RNA-binding domain in the interval 345 to 411 (ISAYELFHEA…GKKRHILVRV (67 aa)).

It belongs to the class-I aminoacyl-tRNA synthetase family. TyrS type 1 subfamily. Homodimer.

It is found in the cytoplasm. The enzyme catalyses tRNA(Tyr) + L-tyrosine + ATP = L-tyrosyl-tRNA(Tyr) + AMP + diphosphate + H(+). Catalyzes the attachment of tyrosine to tRNA(Tyr) in a two-step reaction: tyrosine is first activated by ATP to form Tyr-AMP and then transferred to the acceptor end of tRNA(Tyr). The polypeptide is Tyrosine--tRNA ligase (Rickettsia felis (strain ATCC VR-1525 / URRWXCal2) (Rickettsia azadi)).